The sequence spans 150 residues: Large ribosomal subunit protein bL9 (150 aa).

It belongs to the bacterial ribosomal protein bL9 family.

In terms of biological role, binds to the 23S rRNA. In Streptococcus pyogenes serotype M3 (strain SSI-1), this protein is Large ribosomal subunit protein bL9.